An 828-amino-acid chain; its full sequence is Periplasmic nitrate reductase (828 aa).

The tat-type signal signal peptide spans 1 to 31 (MKLSRRGFMKANAVAAAAAAAGLSVPGVARA). The region spanning 39–95 (IKWDKAPCRFCGTGCGVLVGTQQGRVVACQGDPDAPVNRGLNCIKGYFLPKIMYGED) is the 4Fe-4S Mo/W bis-MGD-type domain. The [4Fe-4S] cluster site is built by Cys-46, Cys-49, Cys-53, and Cys-81. Residues Lys-83, Gln-150, Asn-175, Cys-179, 212-219 (WGANMAEM), 243-247 (STYQH), 262-264 (QSD), Met-372, Gln-376, Asn-482, 508-509 (SD), Lys-531, Asp-558, and 718-727 (TGRVLEHWHT) each bind Mo-bis(molybdopterin guanine dinucleotide). Position 794 (Phe-794) interacts with substrate. Positions 802 and 819 each coordinate Mo-bis(molybdopterin guanine dinucleotide).

The protein belongs to the prokaryotic molybdopterin-containing oxidoreductase family. NasA/NapA/NarB subfamily. In terms of assembly, component of the periplasmic nitrate reductase NapAB complex composed of NapA and NapB. The cofactor is [4Fe-4S] cluster. It depends on Mo-bis(molybdopterin guanine dinucleotide) as a cofactor. In terms of processing, predicted to be exported by the Tat system. The position of the signal peptide cleavage has not been experimentally proven.

Its subcellular location is the periplasm. It catalyses the reaction 2 Fe(II)-[cytochrome] + nitrate + 2 H(+) = 2 Fe(III)-[cytochrome] + nitrite + H2O. Catalytic subunit of the periplasmic nitrate reductase complex NapAB. Receives electrons from NapB and catalyzes the reduction of nitrate to nitrite. The chain is Periplasmic nitrate reductase from Shigella dysenteriae serotype 1 (strain Sd197).